Reading from the N-terminus, the 195-residue chain is MDLEKGKKPSEQAAACRIMQVKDKLITLQPVVRACVFLATAVAAVIMGLNKQSYTTVVAIVGTRPVTQTFTAKFKDTPAFVFFVIANAIASGYNLMVLVTRRILQRRAQSLSVHLLDMVILTLLATGSATAASMAQLGKNGNLHARWNPICDKFGSFCNHGGIALMSSFIGVALMLALNLLSAAANSPRSNVTGQ.

Residues 1-25 (MDLEKGKKPSEQAAACRIMQVKDKL) are Cytoplasmic-facing. The helical transmembrane segment at 26–46 (ITLQPVVRACVFLATAVAAVI) threads the bilayer. The Extracellular segment spans residues 47–78 (MGLNKQSYTTVVAIVGTRPVTQTFTAKFKDTP). A helical transmembrane segment spans residues 79 to 99 (AFVFFVIANAIASGYNLMVLV). The Cytoplasmic segment spans residues 100 to 114 (TRRILQRRAQSLSVH). A helical transmembrane segment spans residues 115–135 (LLDMVILTLLATGSATAASMA). At 136–160 (QLGKNGNLHARWNPICDKFGSFCNH) the chain is on the extracellular side. Residues 161–181 (GGIALMSSFIGVALMLALNLL) form a helical membrane-spanning segment. At 182 to 195 (SAAANSPRSNVTGQ) the chain is on the cytoplasmic side.

This sequence belongs to the Casparian strip membrane proteins (CASP) family. Homodimer and heterodimers.

The protein resides in the cell membrane. This Oryza sativa subsp. indica (Rice) protein is CASP-like protein 1B1.